The following is a 228-amino-acid chain: DNA mismatch repair protein MutH (228 aa).

It belongs to the MutH family.

Its subcellular location is the cytoplasm. Its function is as follows. Sequence-specific endonuclease that cleaves unmethylated GATC sequences. It is involved in DNA mismatch repair. This chain is DNA mismatch repair protein MutH, found in Yersinia pseudotuberculosis serotype IB (strain PB1/+).